The primary structure comprises 301 residues: Probable alpha-L-glutamate ligase (301 aa).

The region spanning 104–287 (LQLLSRKGIG…VAGMIVEFIE (184 aa)) is the ATP-grasp domain. Residues K141, 178-179 (EF), D187, and 211-213 (RSN) each bind ATP. D248, E260, and N262 together coordinate Mg(2+). Positions 248, 260, and 262 each coordinate Mn(2+).

The protein belongs to the RimK family. Mg(2+) serves as cofactor. Mn(2+) is required as a cofactor.

The sequence is that of Probable alpha-L-glutamate ligase from Teredinibacter turnerae (strain ATCC 39867 / T7901).